We begin with the raw amino-acid sequence, 128 residues long: Transmembrane protein 234 homolog (128 aa).

The next 4 helical transmembrane spans lie at 3–23 (TYNI…NPLI), 53–73 (PSYT…FYTL), 80–100 (LVVP…GMLL), and 104–124 (VLHF…TICV).

This sequence belongs to the TMEM234 family.

It is found in the membrane. This Dictyostelium discoideum (Social amoeba) protein is Transmembrane protein 234 homolog.